Consider the following 1171-residue polypeptide: MEGPLLAASLPASAPNSTYIGNQSPRTVSGRYSFGKIHEPLEVPDLLALQTDSFDWLLGNKRWQDRVEASTNGGLAVPTTSGLEEIFEEISPIEDFSGSMSLSFRDHRFEPPKYSLDDCKERDLTYSAPLFVTAEFINGNTGEIKSQTVFMGDFPLMTDRGTFVINGTERVVVSQLVRSPGIYFERVPDKTSDRDTWTAKIIPSRGAWLEFEIDKRDTVGVRVDRKRKQSVTVLMKALGWSESQIREEFADYESMISTLEKDHTSGVEDALLDIYRKLRPGEPPTQEAARNLLDNLYFNPKRYDLAKVGRYKVNKKLGTEEPLSDSVLSVDDIVRTIKYLVKLHAGEVTMPGVKNGQPVDVRVEVDDIDHFGNRRLRSVGELIQNQVRTGLSRMERVVRERMTTQDVEAITPQTLINIRPVVASIKEFFGTSQLSQFMDQTNPLAGLTHKRRLSALGPGGLSRERAGMEVRDVHPSHYGRMCPIETPEGPNIGLIGSLSSYGRINPFGFIETPYRKIVDGVVSDEVEYLTADEEDAFVIAQANAPLDADSRFAEARVLVRAKGGETEFVPRDEVDYMDVAARQMVSVATAMIPFLEHDDANRALMGANMQRQAVPLVKSEAPLIGTGMEFRAAVDAGDVVVATKAGVATDVSADMITTSNDDGTSTTYKVAKFRRSNHGTAYNQQVVINEGDRVEVGTVLADGPSTDGGEMALGRNLMVAFMPWEGHNYEDAIILSQRLVQDDVLSSIHIEEHEVDARDTKLGPEEITRDIPNVAEEVLADLDERGIIRIGAEVRDGDLLVGKVTPKGETELTPEERLLRAIFGEKAREVRDTSLKVPHGETGTVIGVKVFDRDEGDELPPGVNQLVRVYVANKRKITDGDKLAGRHGNKGVISKILPVEDMPFLEDGTPVDVILNPLGVPSRMNVGQVLELHLGWIASRGWKIEGQPDWAKLIPEEIREAPAGSRIATPVFDGAREEEITGLLSSTIPTRDGDRLVGGDGKARLFDGRSGEPFPDPVAVGYMYILKLHHLVDDKIHARSTGPYSMITQQPLGGKAQFGGQRFGEMEVWALEAYGAAYALQELLTIKSDDVLGRVKVYEAIVKGENIPEPGIPESFKVLIKEMQSLCLNVEVLSSDGMAIEMRDSDEDVFRAAEELGIDLARREPSSVEEV.

Belongs to the RNA polymerase beta chain family. The RNAP catalytic core consists of 2 alpha, 1 beta, 1 beta' and 1 omega subunit. When a sigma factor is associated with the core the holoenzyme is formed, which can initiate transcription.

It carries out the reaction RNA(n) + a ribonucleoside 5'-triphosphate = RNA(n+1) + diphosphate. In terms of biological role, DNA-dependent RNA polymerase catalyzes the transcription of DNA into RNA using the four ribonucleoside triphosphates as substrates. This is DNA-directed RNA polymerase subunit beta from Kineococcus radiotolerans (strain ATCC BAA-149 / DSM 14245 / SRS30216).